The primary structure comprises 485 residues: Glutamate--tRNA ligase (485 aa).

A 'HIGH' region motif is present at residues 11–21 (PSPTGLLHIGN). The short motif at 255–259 (KLSKR) is the 'KMSKS' region element. Lysine 258 is an ATP binding site.

The protein belongs to the class-I aminoacyl-tRNA synthetase family. Glutamate--tRNA ligase type 1 subfamily. In terms of assembly, monomer.

It localises to the cytoplasm. It catalyses the reaction tRNA(Glu) + L-glutamate + ATP = L-glutamyl-tRNA(Glu) + AMP + diphosphate. Its function is as follows. Catalyzes the attachment of glutamate to tRNA(Glu) in a two-step reaction: glutamate is first activated by ATP to form Glu-AMP and then transferred to the acceptor end of tRNA(Glu). This chain is Glutamate--tRNA ligase, found in Streptococcus gordonii (strain Challis / ATCC 35105 / BCRC 15272 / CH1 / DL1 / V288).